We begin with the raw amino-acid sequence, 626 residues long: Chaperone protein HtpG (626 aa).

The segment at 1-343 is a; substrate-binding; that stretch reads MHKQTLSFQA…SADLPLNVSR (343 aa). The interval 344-558 is b; sequence ELLQESRAVK…DGDMSTQLAR (215 aa). The c stretch occupies residues 559-626; sequence MLKQAGQAVP…YVKRVNALLV (68 aa).

This sequence belongs to the heat shock protein 90 family. In terms of assembly, homodimer.

It localises to the cytoplasm. Its function is as follows. Molecular chaperone. Has ATPase activity. The chain is Chaperone protein HtpG from Polaromonas sp. (strain JS666 / ATCC BAA-500).